The chain runs to 129 residues: HTH-type transcriptional regulator GlnR (129 aa).

An HTH merR-type domain is found at 10 to 78 (LFPIGIVMDL…MAGIKQVLLM (69 aa)). Residues 13 to 32 (IGIVMDLTQLSARQIRYYEE) constitute a DNA-binding region (H-T-H motif).

As to quaternary structure, homodimer under conditions of nitrogen excess. Monomer under conditions of nitrogen-limited. Interacts with feedback-inhibited GlnA in order to stabilizes GlnR-DNA complex.

Under conditions of nitrogen excess, the DNA binding activity of GlnR is activated by a transient interaction with feedback-inhibited GlnA. Under conditions of nitrogen-limited, GlnR is autoinhibited by its C-terminal region. Transcription repressor during nitrogen excess. On the contrary of the MerR members, which require longer DNA sites for high-affinity binding, GlnR requires a DNA sequence of 17 nucleotides as minimal binding site. The chain is HTH-type transcriptional regulator GlnR from Bacillus anthracis.